The sequence spans 753 residues: MGRLQLVVLGLTCCWAVASAAKLGAVYTEGGFVEGVNKKLGLLGDSVDIFKGIPFAAPTKALENPQPHPGWQGTLKAKNFKKRCLQATITQDSTYGDEDCLYLNIWVPQGRKQVSRDLPVMIWIYGGAFLMGSGHGANFLNNYLYDGEEIATRGNVIVVTFNYRVGPLGFLSTGDANLPGNYGLRDQHMAIAWVKRNIAAFGGDPNNITLFGESAGGASVSLQTLSPYNKGLIRRAISQSGVALSPWVIQKNPLFWAKKVAEKVGCPVGDAARMAQCLKVTDPRALTLAYKVPLAGLEYPMLHYVGFVPVIDGDFIPADPINLYANAADIDYIAGTNNMDGHIFASIDMPAINKGNKKVTEEDFYKLVSEFTITKGLRGAKTTFDVYTESWAQDPSQENKKKTVVDFETDVLFLVPTEIALAQHRANAKSAKTYAYLFSHPSRMPVYPKWVGADHADDIQYVFGKPFATPTGYRPQDRTVSKAMIAYWTNFAKTGDPNMGDSAVPTHWEPYTTENSGYLEITKKMGSSSMKRSLRTNFLRYWTLTYLALPTVTDQEATPVPPTGDSEATPVPPTGDSETAPVPPTGDSGAPPVPPTGDSGAPPVPPTGDSGAPPVPPTGDSGAPPVPPTGDSGAPPVPPTGDSGAPPVPPTGDSGAPPVPPTGDSGAPPVPPTGDAGPPPVPPTGDSGAPPVPPTGDSGAPPVTPTGDSETAPVPPTGDSGAPPVPPTGDSEAAPVPPTDDSKEAQMPAVIRF.

The signal sequence occupies residues 1 to 20; that stretch reads MGRLQLVVLGLTCCWAVASA. Residues 21-121 are heparin-binding; the sequence is AKLGAVYTEG…KQVSRDLPVM (101 aa). A disulfide bridge links Cys84 with Cys100. The N-linked (GlcNAc...) (complex) asparagine glycan is linked to Asn207. Residue Ser214 is the Acyl-ester intermediate of the active site. An intrachain disulfide couples Cys266 to Cys277. Residues Asp340 and His455 each act as charge relay system in the active site. The segment at 555 to 753 is disordered; the sequence is QEATPVPPTG…EAQMPAVIRF (199 aa). O-linked (GalNAc...) threonine glycosylation is found at Thr558, Thr569, and Thr579. Tandem repeats lie at residues 559-569, 570-580, 581-591, 592-602, 603-613, 614-624, 625-635, 636-646, 647-657, 658-668, 669-679, 680-690, 691-701, 702-712, 713-723, 724-734, and 735-745. The segment at 559 to 745 is 17 X 11 AA tandem repeats, glycodomain, O-linked (mucin type); the sequence is PVPPTGDSEA…VPPTDDSKEA (187 aa). Thr607, Thr618, Thr629, Thr640, Thr651, Thr662, and Thr673 each carry an O-linked (GalNAc...) threonine glycan. Over residues 668-683 the composition is skewed to pro residues; that stretch reads PPVPPTGDAGPPPVPP.

Belongs to the type-B carboxylesterase/lipase family. As to quaternary structure, interacts with CLC. Post-translationally, N- and O-glycosylated. In terms of tissue distribution, mammary gland and pancreas. Detected in pancreatic and duodenal juice (at protein level). Expressed by eosinophils.

It localises to the secreted. The enzyme catalyses a triacylglycerol + H2O = a diacylglycerol + a fatty acid + H(+). It carries out the reaction 1,2,3-tri-(9Z-octadecenoyl)-glycerol + H2O = di-(9Z)-octadecenoylglycerol + (9Z)-octadecenoate + H(+). It catalyses the reaction 1,2,3-trioctanoylglycerol + H2O = dioctanoylglycerol + octanoate + H(+). The catalysed reaction is a sterol ester + H2O = a sterol + a fatty acid + H(+). The enzyme catalyses cholesteryl (9Z-octadecenoate) + H2O = cholesterol + (9Z)-octadecenoate + H(+). It carries out the reaction an acetyl ester + H2O = an aliphatic alcohol + acetate + H(+). It catalyses the reaction a butanoate ester + H2O = an aliphatic alcohol + butanoate + H(+). The catalysed reaction is 9-hexadecanoyloxy-octadecanoate + H2O = 9-hydroxy-octadecanoate + hexadecanoate + H(+). The enzyme catalyses 9-(9Z-octadecenoyloxy)-octadecanoate + H2O = 9-hydroxy-octadecanoate + (9Z)-octadecenoate + H(+). It carries out the reaction 1-hexadecanoyl-sn-glycero-3-phosphocholine + H2O = sn-glycerol 3-phosphocholine + hexadecanoate + H(+). It catalyses the reaction 12-hexadecanoyloxy-octadecanoate + H2O = 12-hydroxyoctadecanoate + hexadecanoate + H(+). The catalysed reaction is 12-(9Z-octadecenoyloxy)-octadecanoate + H2O = 12-hydroxyoctadecanoate + (9Z)-octadecenoate + H(+). The enzyme catalyses 13-(9Z-octadecenoyloxy)-octadecanoate + H2O = 13-hydroxy-octadecanoate + (9Z)-octadecenoate + H(+). It carries out the reaction 9-(9Z-hexadecenoyloxy)-octadecanoate + H2O = (9Z)-hexadecenoate + 9-hydroxy-octadecanoate + H(+). It catalyses the reaction 12-(9Z-hexadecenoyloxy)-octadecanoate + H2O = 12-hydroxyoctadecanoate + (9Z)-hexadecenoate + H(+). The catalysed reaction is 13-(9Z-hexadecenoyloxy)-octadecanoate + H2O = 13-hydroxy-octadecanoate + (9Z)-hexadecenoate + H(+). The enzyme catalyses 12-octadecanoyloxy-octadecanoate + H2O = 12-hydroxyoctadecanoate + octadecanoate + H(+). It carries out the reaction 13-octadecanoyloxy-octadecanoate + H2O = 13-hydroxy-octadecanoate + octadecanoate + H(+). It catalyses the reaction 5-(9Z-hexadecenoyloxy)-octadecanoate + H2O = 5-hydroxy-octadecanoate + (9Z)-hexadecenoate + H(+). The catalysed reaction is 9-octadecanoyloxy-octadecanoate + H2O = 9-hydroxy-octadecanoate + octadecanoate + H(+). With respect to regulation, activated by bile salts such as sodium taurocholate. Functionally, catalyzes the hydrolysis of a wide range of substrates including cholesteryl esters, phospholipids, lysophospholipids, di- and tri-acylglycerols, and fatty acid esters of hydroxy fatty acids (FAHFAs). Preferentially hydrolyzes FAHFAs with the ester bond further away from the carboxylate. Unsaturated FAHFAs are hydrolyzed more quickly than saturated FAHFAs. Has an essential role in the complete digestion of dietary lipids and their intestinal absorption, along with the absorption of fat-soluble vitamins. This is Bile salt-activated lipase (CEL) from Homo sapiens (Human).